Here is a 552-residue protein sequence, read N- to C-terminus: Hyaluronan synthase 2 (552 aa).

The Cytoplasmic portion of the chain corresponds to 1-11 (MHCERFLCILR). Residues 12-32 (IIGTTLFGVSLLLGITAAYIV) traverse the membrane as a helical segment. Topologically, residues 33–45 (GYQFIQTDNYYFS) are extracellular. Residues 46–66 (FGLYGAFLASHLIIQSLFAFL) form a helical membrane-spanning segment. The Cytoplasmic portion of the chain corresponds to 67–374 (EHRKMKKSLE…NAMWFHKHHL (308 aa)). Phosphothreonine is present on threonine 110. Lysine 190 participates in a covalent cross-link: Glycyl lysine isopeptide (Lys-Gly) (interchain with G-Cter in ubiquitin). The O-linked (GlcNAc) serine glycan is linked to serine 221. A Phosphothreonine modification is found at threonine 328. The helical transmembrane segment at 375–395 (WMTYEAVITGFFPFFLIATVI) threads the bilayer. The Extracellular segment spans residues 396–402 (QLFYRGK). The chain crosses the membrane as a helical span at residues 403–423 (IWNILLFLLTVQLVGLIKSSF). Residues 424 to 429 (ASCLRG) lie on the Cytoplasmic side of the membrane. The helical transmembrane segment at 430-450 (NIVMVFMSLYSVLYMSSLLPA) threads the bilayer. The Extracellular segment spans residues 451 to 475 (KMFAIATINKAGWGTSGRKTIVVNF). Residues 476 to 496 (IGLIPVSVWFTILLGGVIFTI) form a helical membrane-spanning segment. At 497-510 (YKESKKPFSESKQT) the chain is on the cytoplasmic side. A helical membrane pass occupies residues 511 to 531 (VLIVGTLLYACYWVMLLTLYV). The Extracellular segment spans residues 532 to 552 (VLINKCGRRKKGQQYDMVLDV).

Belongs to the NodC/HAS family. Homodimer; dimerization promotes enzymatic activity. Forms heterodimer with HAS3. Forms heterodimer with HAS1. Requires Mg(2+) as cofactor. Post-translationally, phosphorylation at Thr-328 is essential for hyaluronan synthase activity. O-GlcNAcylation at Ser-221 increases the stability of HAS2 and plasma membrane localization. In terms of processing, ubiquitination at Lys-190; this ubiquitination is essential for hyaluronan synthase activity and homo- or hetero-oligomerization. Can also be poly-ubiquitinated. Deubiquitinated by USP17L22/USP17 and USP4. USP17L22/USP17 efficiently removes 'Lys-63'- and 'Lys-48'-linked polyubiquitin chains, whereas USP4 preferentially removes monoubiquitination and, partially, both 'Lys-63'- and 'Lys-48'-linked polyubiquitin chain. Overexpressed in skin fibroblasts.

It is found in the cell membrane. The protein localises to the endoplasmic reticulum membrane. It localises to the vesicle. Its subcellular location is the golgi apparatus membrane. The protein resides in the lysosome. It carries out the reaction [hyaluronan](n) + UDP-N-acetyl-alpha-D-glucosamine = N-acetyl-beta-D-glucosaminyl-(1-&gt;4)-[hyaluronan](n) + UDP + H(+). It catalyses the reaction N-acetyl-beta-D-glucosaminyl-(1-&gt;4)-[hyaluronan](n) + UDP-alpha-D-glucuronate = [hyaluronan](n+1) + UDP + H(+). Its pathway is glycan biosynthesis; hyaluronan biosynthesis. In terms of biological role, catalyzes the addition of GlcNAc or GlcUA monosaccharides to the nascent hyaluronan polymer. Therefore, it is essential to hyaluronan synthesis a major component of most extracellular matrices that has a structural role in tissues architectures and regulates cell adhesion, migration and differentiation. This is one of three isoenzymes responsible for cellular hyaluronan synthesis and it is particularly responsible for the synthesis of high molecular mass hyaluronan. This chain is Hyaluronan synthase 2 (Has2), found in Heterocephalus glaber (Naked mole rat).